Consider the following 324-residue polypeptide: Phthalate 4,5-dioxygenase oxygenase reductase subunit (324 aa).

Residues 9 to 111 form the FAD-binding FR-type domain; the sequence is DGFTGLKVIA…ATPQNEFELI (103 aa). Residue 115–229 participates in NAD(+) binding; that stretch reads RQFIFVAGGI…PGSIHFESFG (115 aa). The 2Fe-2S ferredoxin-type domain maps to 241–324; that stretch reads FSVTLGRSGI…ARNDVLVLDL (84 aa). Residues C275, C280, C283, and C311 each contribute to the [2Fe-2S] cluster site.

It belongs to the PDR/VanB family. This dioxygenase system consists of two proteins: phthalate oxygenase and phthalate oxygenase reductase. The cofactor is FMN.

It catalyses the reaction phthalate + NADH + O2 + H(+) = cis-4,5-dihydroxycyclohexa-2,6-diene-1,2-dicarboxylate + NAD(+). It functions in the pathway xenobiotic degradation; phthalate degradation; 3,4-dihydroxybenzoate from phthalate: step 1/3. This is Phthalate 4,5-dioxygenase oxygenase reductase subunit (pht2) from Pseudomonas putida (Arthrobacter siderocapsulatus).